The following is a 305-amino-acid chain: Nitrogen assimilation regulatory protein nac (305 aa).

The region spanning 1 to 58 (MNLRRLKYFVKIVDIGSLTQAAEVLHIAQPALSQQVATLEGEMDQQLLIRTKRGVTPT) is the HTH lysR-type domain. Residues 18-37 (LTQAAEVLHIAQPALSQQVA) constitute a DNA-binding region (H-T-H motif).

This sequence belongs to the LysR transcriptional regulatory family.

Functionally, transcriptional activator for the hut, put and ure operons and repressor for the gdh and gltB operons in response to nitrogen limitation. Negative regulator of its own expression. The polypeptide is Nitrogen assimilation regulatory protein nac (nac) (Klebsiella aerogenes (Enterobacter aerogenes)).